Reading from the N-terminus, the 284-residue chain is HTH-type transcriptional activator RhaR (284 aa).

One can recognise an HTH araC/xylS-type domain in the interval 181–279 (DMLMNALRAS…GVSPSAYRQR (99 aa)). 2 consecutive DNA-binding regions (H-T-H motif) follow at residues 198 to 219 (EAFC…KEQT) and 246 to 269 (IGDV…HQAF).

As to quaternary structure, binds DNA as a dimer.

It localises to the cytoplasm. In terms of biological role, activates expression of the rhaSR operon in response to L-rhamnose. The sequence is that of HTH-type transcriptional activator RhaR from Pectobacterium atrosepticum (strain SCRI 1043 / ATCC BAA-672) (Erwinia carotovora subsp. atroseptica).